Reading from the N-terminus, the 307-residue chain is MVGGGVIRQLLRRKLHSQSVATPVLSWLSSKKANEDAGSAGLRAFALMGAGITGLLSFSTVASADEAEHGLECPNYPWPHEGILSSYDHASIRRGHQVYQQVCASCHSMSLISYRDLVGVAYTEEEAKAMAAEIEVVDGPNDEGEMFTRPGKLSDRLPEPYSNESAARFANGGAYPPDLSLVTKARHNGQNYVFALLTGYRDPPAGISIREGLHYNPYFPGGAIAMPKMLNDEAVEYEDGTPATEAQMGKDVVSFLSWAAEPEMEERKLMGFKWIFLLSLALLQAAYYRRLKWSVLKSRKLVLDVVN.

The N-terminal 64 residues, 1-64 (MVGGGVIRQL…LLSFSTVASA (64 aa)), are a transit peptide targeting the mitochondrion. Residues 65-270 (DEAEHGLECP…EPEMEERKLM (206 aa)) lie on the Mitochondrial intermembrane side of the membrane. Residues 90–197 (ASIRRGHQVY…NGQNYVFALL (108 aa)) enclose the Cytochrome c domain. C103, C106, H107, and M226 together coordinate heme c. The helical transmembrane segment at 271-288 (GFKWIFLLSLALLQAAYY) threads the bilayer. Over 289 to 307 (RRLKWSVLKSRKLVLDVVN) the chain is Mitochondrial matrix.

Belongs to the cytochrome c family. Component of the ubiquinol-cytochrome c oxidoreductase (cytochrome b-c1 complex, complex III, CIII), a multisubunit enzyme composed of 10 subunits. The complex is composed of 3 respiratory subunits cytochrome b (MT-CYB), cytochrome c1 (CYC1-1 or CYC1-2) and Rieske protein (UCR1-1 or UCR1-2), 2 core protein subunits MPPalpha1 (or MPPalpha2) and MPPB, and 5 low-molecular weight protein subunits QCR7-1 (or QCR7-2), UCRQ-1 (or UCRQ-2), QCR9, UCRY and probably QCR6-1 (or QCR6-2). The complex exists as an obligatory dimer and forms supercomplexes (SCs) in the inner mitochondrial membrane with NADH-ubiquinone oxidoreductase (complex I, CI), resulting in different assemblies (supercomplexes SCI(1)III(2) and SCI(2)III(4)). In terms of processing, binds 1 heme c group covalently per subunit.

The protein resides in the mitochondrion inner membrane. Its function is as follows. Component of the ubiquinol-cytochrome c oxidoreductase, a multisubunit transmembrane complex that is part of the mitochondrial electron transport chain which drives oxidative phosphorylation. The respiratory chain contains 3 multisubunit complexes succinate dehydrogenase (complex II, CII), ubiquinol-cytochrome c oxidoreductase (cytochrome b-c1 complex, complex III, CIII) and cytochrome c oxidase (complex IV, CIV), that cooperate to transfer electrons derived from NADH and succinate to molecular oxygen, creating an electrochemical gradient over the inner membrane that drives transmembrane transport and the ATP synthase. The cytochrome b-c1 complex catalyzes electron transfer from ubiquinol to cytochrome c, linking this redox reaction to translocation of protons across the mitochondrial inner membrane, with protons being carried across the membrane as hydrogens on the quinol. In the process called Q cycle, 2 protons are consumed from the matrix, 4 protons are released into the intermembrane space and 2 electrons are passed to cytochrome c. Cytochrome c1 is a catalytic core subunit containing a c-type heme. It transfers electrons from the [2Fe-2S] iron-sulfur cluster of the Rieske protein to cytochrome c. The sequence is that of Cytochrome c1 2, heme protein, mitochondrial (CYC1-2) from Arabidopsis thaliana (Mouse-ear cress).